The sequence spans 147 residues: Hemoglobin subunit epsilon (147 aa).

The region spanning 3–147 (HFTAEEKNAI…VANALAHKYH (145 aa)) is the Globin domain. Serine 51 bears the Phosphoserine mark. Histidine 64 and histidine 93 together coordinate heme b.

Belongs to the globin family. In terms of assembly, heterotetramer of two alpha chains and two epsilon chains in early embryonic hemoglobin Gower-2; two zeta chains and two epsilon chains in early embryonic hemoglobin Gower-1. In terms of tissue distribution, red blood cells.

The epsilon chain is a beta-type chain of early mammalian embryonic hemoglobin. The sequence is that of Hemoglobin subunit epsilon (HBE1) from Sminthopsis crassicaudata (Fat-tailed dunnart).